Consider the following 259-residue polypeptide: Ribosomal RNA small subunit methyltransferase J (259 aa).

S-adenosyl-L-methionine contacts are provided by residues 101 to 102 (RD), 117 to 118 (ER), 153 to 154 (SS), and D176.

This sequence belongs to the methyltransferase superfamily. RsmJ family.

The protein localises to the cytoplasm. It catalyses the reaction guanosine(1516) in 16S rRNA + S-adenosyl-L-methionine = N(2)-methylguanosine(1516) in 16S rRNA + S-adenosyl-L-homocysteine + H(+). In terms of biological role, specifically methylates the guanosine in position 1516 of 16S rRNA. This chain is Ribosomal RNA small subunit methyltransferase J, found in Vibrio vulnificus (strain YJ016).